The primary structure comprises 325 residues: N-acetyl-gamma-glutamyl-phosphate reductase (325 aa).

The active site involves Cys135.

Belongs to the NAGSA dehydrogenase family. Type 1 subfamily.

The protein resides in the cytoplasm. It catalyses the reaction N-acetyl-L-glutamate 5-semialdehyde + phosphate + NADP(+) = N-acetyl-L-glutamyl 5-phosphate + NADPH + H(+). Its pathway is amino-acid biosynthesis; L-arginine biosynthesis; N(2)-acetyl-L-ornithine from L-glutamate: step 3/4. In terms of biological role, catalyzes the NADPH-dependent reduction of N-acetyl-5-glutamyl phosphate to yield N-acetyl-L-glutamate 5-semialdehyde. This chain is N-acetyl-gamma-glutamyl-phosphate reductase, found in Karelsulcia muelleri (strain GWSS) (Sulcia muelleri).